Here is a 235-residue protein sequence, read N- to C-terminus: Proteasome subunit alpha (235 aa).

It belongs to the peptidase T1A family. The 20S proteasome core is composed of 14 alpha and 14 beta subunits that assemble into four stacked heptameric rings, resulting in a barrel-shaped structure. The two inner rings, each composed of seven catalytic beta subunits, are sandwiched by two outer rings, each composed of seven alpha subunits. The catalytic chamber with the active sites is on the inside of the barrel. Has a gated structure, the ends of the cylinder being occluded by the N-termini of the alpha-subunits. Is capped by the proteasome-associated ATPase, ARC.

It localises to the cytoplasm. It functions in the pathway protein degradation; proteasomal Pup-dependent pathway. The formation of the proteasomal ATPase ARC-20S proteasome complex, likely via the docking of the C-termini of ARC into the intersubunit pockets in the alpha-rings, may trigger opening of the gate for substrate entry. Interconversion between the open-gate and close-gate conformations leads to a dynamic regulation of the 20S proteasome proteolysis activity. In terms of biological role, component of the proteasome core, a large protease complex with broad specificity involved in protein degradation. In Arthrobacter sp. (strain FB24), this protein is Proteasome subunit alpha.